The following is a 355-amino-acid chain: Peptide chain release factor 1 (355 aa).

At glutamine 233 the chain carries N5-methylglutamine.

The protein belongs to the prokaryotic/mitochondrial release factor family. Methylated by PrmC. Methylation increases the termination efficiency of RF1.

Its subcellular location is the cytoplasm. In terms of biological role, peptide chain release factor 1 directs the termination of translation in response to the peptide chain termination codons UAG and UAA. The polypeptide is Peptide chain release factor 1 (Syntrophomonas wolfei subsp. wolfei (strain DSM 2245B / Goettingen)).